The chain runs to 397 residues: Tryptophan synthase beta chain (397 aa).

The residue at position 89 (K89) is an N6-(pyridoxal phosphate)lysine.

Belongs to the TrpB family. In terms of assembly, tetramer of two alpha and two beta chains. Requires pyridoxal 5'-phosphate as cofactor.

It carries out the reaction (1S,2R)-1-C-(indol-3-yl)glycerol 3-phosphate + L-serine = D-glyceraldehyde 3-phosphate + L-tryptophan + H2O. Its pathway is amino-acid biosynthesis; L-tryptophan biosynthesis; L-tryptophan from chorismate: step 5/5. In terms of biological role, the beta subunit is responsible for the synthesis of L-tryptophan from indole and L-serine. The polypeptide is Tryptophan synthase beta chain (Leptospira interrogans serogroup Icterohaemorrhagiae serovar copenhageni (strain Fiocruz L1-130)).